Reading from the N-terminus, the 55-residue chain is MRQFDPWPVFFRREWSRNWPFLVGFAVTGAIITKMSLGFTEEERKNSRFAQRHKN.

Residues 1–15 (MRQFDPWPVFFRREW) constitute a mitochondrion transit peptide. Residues 20 to 39 (PFLVGFAVTGAIITKMSLGF) traverse the membrane as a helical segment.

It belongs to the ATPase 6 subunit family.

The protein resides in the mitochondrion inner membrane. In terms of biological role, mitochondrial membrane ATP synthase (F(1)F(0) ATP synthase or Complex V) produces ATP from ADP in the presence of a proton gradient across the membrane which is generated by electron transport complexes of the respiratory chain. F-type ATPases consist of two structural domains, F(1) - containing the extramembraneous catalytic core and F(0) - containing the membrane proton channel, linked together by a central stalk and a peripheral stalk. During catalysis, ATP synthesis in the catalytic domain of F(1) is coupled via a rotary mechanism of the central stalk subunits to proton translocation. Part of the complex F(0) domain. Confers tolerance to several abiotic stresses (e.g. salt, mannitol, drought, oxidative and cold stresses), probably by providing additional energy needed for cell homeostasis. The chain is ATP synthase small subunit 6, mitochondrial from Solanum tuberosum (Potato).